Here is a 397-residue protein sequence, read N- to C-terminus: DNA-directed RNA polymerase subunit Rpo1C (397 aa).

Belongs to the RNA polymerase beta' chain family. In terms of assembly, part of the RNA polymerase complex.

Its subcellular location is the cytoplasm. The enzyme catalyses RNA(n) + a ribonucleoside 5'-triphosphate = RNA(n+1) + diphosphate. In terms of biological role, DNA-dependent RNA polymerase (RNAP) catalyzes the transcription of DNA into RNA using the four ribonucleoside triphosphates as substrates. Forms part of the jaw domain. This Pyrococcus abyssi (strain GE5 / Orsay) protein is DNA-directed RNA polymerase subunit Rpo1C.